We begin with the raw amino-acid sequence, 317 residues long: U5 small nuclear ribonucleoprotein TSSC4 (317 aa).

Residues 1–19 show a composition bias toward acidic residues; that stretch reads MAETEAGLEADEPTEDDTL. Residues 1 to 74 are disordered; it reads MAETEAGLEA…PPTGTLTTAV (74 aa). Over residues 20–37 the composition is skewed to low complexity; the sequence is PSDTVSLSDSDSDLSLPS. Residues Ser-57, Ser-64, Ser-83, and Ser-92 each carry the phosphoserine modification. The interval 74 to 101 is hom2; mediates interaction with the U5 snRNP complexes and required for spliceosomal tri-snRNP complex assembly; sequence VQPFHLRGMSSTFSQRSHSIFDCLESAA. Residues 101–152 are disordered; the sequence is ARQAPCSAPQTSVSDNGSFRRPVTPPSQTPARGLSRVHGNTGPTRVLPVPDY. Residues 108 to 117 are compositionally biased toward polar residues; that stretch reads APQTSVSDNG. A Phosphothreonine modification is found at Thr-124. The interval 146 to 300 is interaction with SNRNP200; sequence VLPVPDYVSH…SKKRSRDHFR (155 aa). The interval 147–183 is hom3; mediates interaction with the U5 snRNP complexes; it reads LPVPDYVSHPERWTKYSLEDVSEASEQSNRDAALAFL. The tract at residues 198–238 is hom4; necessary for interaction with the PRPF19 complex and required for spliceosomal tri-snRNP complex assembly; the sequence is FNQDPSSCGEGRVVFTKPVRDSEARAERKRVLKKGVGSGAG. Residue Lys-214 is modified to N6-acetyllysine. A disordered region spans residues 216–317; sequence VRDSEARAER…GPGSERGPSV (102 aa). A compositionally biased stretch (low complexity) spans 240–250; that stretch reads EAAVELAHLAG.

Belongs to the TSSC4 family. In terms of assembly, interacts in a RNA-independent manner with distinct U5 snRNP-containing complexes, the mono-U5 snRNP and the post-splicing U5 snRNP-PRPF19 complex. Interacts with SNRNP200; the interaction is direct, excludes recruitment of C9ORF78 and WBP4 to SNRNP200 and negatively regulates its RNA helicase activity. Interacts with PRPF8; the interaction is direct. In terms of tissue distribution, expressed in placenta. Widely expressed in embryo and newborn.

Its subcellular location is the nucleus. It localises to the cytoplasm. In terms of biological role, protein associated with the U5 snRNP, during its maturation and its post-splicing recycling and which is required for spliceosomal tri-snRNP complex assembly in the nucleus. Has a molecular sequestering activity and transiently hinders SNRNP200 binding sites for constitutive splicing factors that intervene later during the assembly of the spliceosome and splicing. Together with its molecular sequestering activity, may also function as a molecular adapter and placeholder, coordinating the assembly of the U5 snRNP and its association with the U4/U6 di-snRNP. This is U5 small nuclear ribonucleoprotein TSSC4 from Mus musculus (Mouse).